The following is a 141-amino-acid chain: Hemoglobin subunit alpha (141 aa).

The Globin domain occupies 1 to 141 (VLSPADKTNI…VSTVLTSKYR (141 aa)). Ser-3 is modified (phosphoserine). Lys-7 is subject to N6-succinyllysine. Thr-8 is subject to Phosphothreonine. Position 11 is an N6-succinyllysine (Lys-11). At Lys-16 the chain carries N6-acetyllysine; alternate. Lys-16 bears the N6-succinyllysine; alternate mark. A Phosphotyrosine modification is found at Tyr-24. Ser-35 bears the Phosphoserine mark. At Lys-40 the chain carries N6-succinyllysine. Ser-49 bears the Phosphoserine mark. Residue His-58 coordinates O2. Position 87 (His-87) interacts with heme b. Ser-102 bears the Phosphoserine mark. At Thr-108 the chain carries Phosphothreonine. Residue Ser-124 is modified to Phosphoserine. Thr-134 and Thr-137 each carry phosphothreonine. At Ser-138 the chain carries Phosphoserine.

Belongs to the globin family. As to quaternary structure, heterotetramer of two alpha chains and two beta chains. As to expression, red blood cells.

In terms of biological role, involved in oxygen transport from the lung to the various peripheral tissues. Functionally, hemopressin acts as an antagonist peptide of the cannabinoid receptor CNR1. Hemopressin-binding efficiently blocks cannabinoid receptor CNR1 and subsequent signaling. In Canis lupus familiaris (Dog), this protein is Hemoglobin subunit alpha (HBA).